The primary structure comprises 283 residues: Cytosolic Fe-S cluster assembly factor CFD1 (283 aa).

ATP is bound at residue 26-33; it reads GKGGVGKS. Residues Cys-202 and Cys-205 each contribute to the [4Fe-4S] cluster site.

Belongs to the Mrp/NBP35 ATP-binding proteins family. NUBP2/CFD1 subfamily. Heterotetramer of 2 NBP35 and 2 CFD1 chains. It depends on [4Fe-4S] cluster as a cofactor.

It localises to the cytoplasm. In terms of biological role, component of the cytosolic iron-sulfur (Fe/S) protein assembly (CIA) machinery. Required for maturation of extramitochondrial Fe-S proteins. The NBP35-CFD1 heterotetramer forms a Fe-S scaffold complex, mediating the de novo assembly of an Fe-S cluster and its transfer to target apoproteins. Required for biogenesis and export of both ribosomal subunits, which may reflect a role in assembly of the Fe/S clusters in RLI1, a protein which performs rRNA processing and ribosome export. This Kluyveromyces lactis (strain ATCC 8585 / CBS 2359 / DSM 70799 / NBRC 1267 / NRRL Y-1140 / WM37) (Yeast) protein is Cytosolic Fe-S cluster assembly factor CFD1.